Consider the following 197-residue polypeptide: Ras-like protein rasB (197 aa).

G13–S20 is a binding site for GTP. Positions Y35–Y43 match the Effector region motif. Residues D60–Q64 and N119–D122 contribute to the GTP site. Residue C194 is modified to Cysteine methyl ester. The S-geranylgeranyl cysteine moiety is linked to residue C194. Positions L195–L197 are cleaved as a propeptide — removed in mature form.

The protein belongs to the small GTPase superfamily. Ras family.

It is found in the cell membrane. The catalysed reaction is GTP + H2O = GDP + phosphate + H(+). With respect to regulation, alternates between an inactive form bound to GDP and an active form bound to GTP. Activated by a guanine nucleotide-exchange factor (GEF) and inactivated by a GTPase-activating protein (GAP). Ras proteins bind GDP/GTP and possess intrinsic GTPase activity. This chain is Ras-like protein rasB (rasB), found in Dictyostelium discoideum (Social amoeba).